Reading from the N-terminus, the 403-residue chain is Ribosomal RNA large subunit methyltransferase I (403 aa).

The PUA domain occupies 9 to 88; the sequence is YPRLVLSKGR…ESIDIAFFTR (80 aa).

The protein belongs to the methyltransferase superfamily. RlmI family.

It is found in the cytoplasm. It catalyses the reaction cytidine(1962) in 23S rRNA + S-adenosyl-L-methionine = 5-methylcytidine(1962) in 23S rRNA + S-adenosyl-L-homocysteine + H(+). Specifically methylates the cytosine at position 1962 (m5C1962) of 23S rRNA. The polypeptide is Ribosomal RNA large subunit methyltransferase I (Salmonella enteritidis PT4 (strain P125109)).